The primary structure comprises 320 residues: MATNVNEEQYLDLIRYVLANGHQKGDRTGTGTKSVFGYQMRFDLSKGFPILTTKKVPFGLIKSELLWFLRGDTNIRFLLQHKNHIWDEWAFKKWVESDEYQGPDMTDFGHRWLKDPEFKQVYLQEKKAFCQRILEDDDFAQKYGDLGLVYGSQWRKWKTSQGDTIDQIANVIQQIKTTPDSRRMIVSAWNPEDVPSMALPPCHTMFQFYVNDGKLSCQLYQRSADIFLGVPFNIASYALLTHMIAHQCGLEPGEFVHTLGDAHIYLNHLDQVKEQLTRTPHEAPKLILPAEPKPIDQYEMTDIKLEGYTHEPAIKAPVAV.

Residues Arg-27 and 182 to 183 contribute to the dUMP site; that span reads RR. Cys-202 acts as the Nucleophile in catalysis. DUMP is bound by residues 222 to 225, Asn-233, and 263 to 265; these read RSAD and HIY. Asp-225 serves as a coordination point for (6R)-5,10-methylene-5,6,7,8-tetrahydrofolate. Ala-319 contributes to the (6R)-5,10-methylene-5,6,7,8-tetrahydrofolate binding site.

Belongs to the thymidylate synthase family. Bacterial-type ThyA subfamily. As to quaternary structure, homodimer.

It localises to the cytoplasm. The catalysed reaction is dUMP + (6R)-5,10-methylene-5,6,7,8-tetrahydrofolate = 7,8-dihydrofolate + dTMP. It functions in the pathway pyrimidine metabolism; dTTP biosynthesis. Its function is as follows. Catalyzes the reductive methylation of 2'-deoxyuridine-5'-monophosphate (dUMP) to 2'-deoxythymidine-5'-monophosphate (dTMP) while utilizing 5,10-methylenetetrahydrofolate (mTHF) as the methyl donor and reductant in the reaction, yielding dihydrofolate (DHF) as a by-product. This enzymatic reaction provides an intracellular de novo source of dTMP, an essential precursor for DNA biosynthesis. In Limosilactobacillus reuteri (strain DSM 20016) (Lactobacillus reuteri), this protein is Thymidylate synthase.